The following is a 440-amino-acid chain: Thymidine phosphorylase (440 aa).

It belongs to the thymidine/pyrimidine-nucleoside phosphorylase family. In terms of assembly, homodimer.

It catalyses the reaction thymidine + phosphate = 2-deoxy-alpha-D-ribose 1-phosphate + thymine. It participates in pyrimidine metabolism; dTMP biosynthesis via salvage pathway; dTMP from thymine: step 1/2. The enzymes which catalyze the reversible phosphorolysis of pyrimidine nucleosides are involved in the degradation of these compounds and in their utilization as carbon and energy sources, or in the rescue of pyrimidine bases for nucleotide synthesis. The chain is Thymidine phosphorylase from Escherichia coli (strain 55989 / EAEC).